The chain runs to 723 residues: Polyribonucleotide nucleotidyltransferase (723 aa).

The Mg(2+) site is built by Asp-487 and Asp-493. Positions 554 to 613 constitute a KH domain; the sequence is PKILIMHINPDKIREVIGPSGKQINKIIDETGVKIDIEQDGTIFISSVDEAANQKAKQII. Residues 623–691 enclose the S1 motif domain; that stretch reads GQVYLGKVKR…KQGRVNLSRK (69 aa). A disordered region spans residues 702 to 723; sequence GELPRESREKRGRRPERHRMKP. Residues 711–723 are compositionally biased toward basic residues; the sequence is KRGRRPERHRMKP.

It belongs to the polyribonucleotide nucleotidyltransferase family. The cofactor is Mg(2+).

Its subcellular location is the cytoplasm. It carries out the reaction RNA(n+1) + phosphate = RNA(n) + a ribonucleoside 5'-diphosphate. Involved in mRNA degradation. Catalyzes the phosphorolysis of single-stranded polyribonucleotides processively in the 3'- to 5'-direction. The polypeptide is Polyribonucleotide nucleotidyltransferase (Geobacillus kaustophilus (strain HTA426)).